The sequence spans 461 residues: Transcriptional activator RocR (461 aa).

At Asp57 the chain carries 4-aspartylphosphate. The Sigma-54 factor interaction domain maps to 143–372 (ILGTSPAIQD…EHMIEGAMNF (230 aa)). Residues 171–178 (GETGTGKE) and 233–242 (AHGGTLLLDE) contribute to the ATP site. Residues 434 to 453 (ISKAAQELGISRQSLQYRLK) constitute a DNA-binding region (H-T-H motif).

In terms of biological role, positive regulator of arginine catabolism. Controls the transcription of the two operons rocABC and rocDEF and probably acts by binding to the corresponding upstream activating sequences. The polypeptide is Transcriptional activator RocR (rocR) (Bacillus subtilis (strain 168)).